Consider the following 286-residue polypeptide: Meteorin-like protein (286 aa).

Positions 1 to 20 (MLRRGLLSFFMVILIDRGTS) are cleaved as a signal peptide. 5 disulfide bridges follow: Cys28-Cys51, Cys84-Cys120, Cys165-Cys235, Cys168-Cys259, and Cys178-Cys281. The N-linked (GlcNAc...) asparagine glycan is linked to Asn203.

This sequence belongs to the meteorin family.

Its subcellular location is the secreted. Its function is as follows. Hormone induced following exercise or cold exposure that promotes energy expenditure. Induced either in the skeletal muscle after exercise or in adipose tissue following cold exposure and is present in the circulation. Able to stimulate energy expenditure associated with the browning of the white fat depots and improves glucose tolerance. In Xenopus laevis (African clawed frog), this protein is Meteorin-like protein (metrnl).